The primary structure comprises 384 residues: Toluene efflux pump periplasmic linker protein TtgA (384 aa).

A signal peptide spans 1–22 (MQFKPAVTALVSAVALATLLSG). The N-palmitoyl cysteine moiety is linked to residue Cys-23. Cys-23 carries the S-diacylglycerol cysteine lipid modification. A coiled-coil region spans residues 115–155 (LAERYKQLIDEQAVSKQEYDDANAKRLQAEASLKSAQIDLR). A disordered region spans residues 362–384 (ATNVKKPAGPDQANAAKADAKAE). Residues 368–378 (PAGPDQANAAK) show a composition bias toward low complexity.

This sequence belongs to the membrane fusion protein (MFP) (TC 8.A.1) family.

The protein resides in the cell inner membrane. Functionally, the periplasmic linker protein component of a constitutive organic solvent efflux system. Involved in export of toluene, styrene, m-xylene, propylbenzene and ethylbenzene. Also exports AMP and the antibiotics carbenicillin, nalidixic acid, chloramphenicol and tetracycline. This chain is Toluene efflux pump periplasmic linker protein TtgA (ttgA), found in Pseudomonas putida (strain DOT-T1E).